We begin with the raw amino-acid sequence, 713 residues long: Ribosomal RNA large subunit methyltransferase K/L (713 aa).

One can recognise a THUMP domain in the interval 43 to 154 (LAYRITLWTR…NGVITIAMNF (112 aa)).

The protein belongs to the methyltransferase superfamily. RlmKL family.

The protein resides in the cytoplasm. It carries out the reaction guanosine(2445) in 23S rRNA + S-adenosyl-L-methionine = N(2)-methylguanosine(2445) in 23S rRNA + S-adenosyl-L-homocysteine + H(+). The catalysed reaction is guanosine(2069) in 23S rRNA + S-adenosyl-L-methionine = N(2)-methylguanosine(2069) in 23S rRNA + S-adenosyl-L-homocysteine + H(+). Its function is as follows. Specifically methylates the guanine in position 2445 (m2G2445) and the guanine in position 2069 (m7G2069) of 23S rRNA. This is Ribosomal RNA large subunit methyltransferase K/L from Shewanella sp. (strain MR-7).